We begin with the raw amino-acid sequence, 154 residues long: Deoxyuridine 5'-triphosphate nucleotidohydrolase (154 aa).

Substrate-binding positions include 70–72, N83, 87–89, and M97; these read RSG and LID.

The protein belongs to the dUTPase family. It depends on Mg(2+) as a cofactor.

The catalysed reaction is dUTP + H2O = dUMP + diphosphate + H(+). It functions in the pathway pyrimidine metabolism; dUMP biosynthesis; dUMP from dCTP (dUTP route): step 2/2. Functionally, this enzyme is involved in nucleotide metabolism: it produces dUMP, the immediate precursor of thymidine nucleotides and it decreases the intracellular concentration of dUTP so that uracil cannot be incorporated into DNA. This is Deoxyuridine 5'-triphosphate nucleotidohydrolase from Buchnera aphidicola subsp. Acyrthosiphon pisum (strain 5A).